We begin with the raw amino-acid sequence, 540 residues long: Kinesin light chain (540 aa).

Residues 34-138 (LETSVKGVKE…NKHLKYMASI (105 aa)) adopt a coiled-coil conformation. TPR repeat units lie at residues 206 to 239 (LRTLHNLVIQYASQGRYEVAVPLCKQALEDLEKT), 248 to 281 (ATMLNILALVYRDQNKYKEAANLLNEALSIREKC), 290 to 323 (AATLNNLAVLFGKRGKFKDAEPLCKRALEIREKV), 332 to 365 (AKQLNNLALLCQNQGKYEEVEKYYKRALEIYESK), 374 to 407 (AKTKNNLSSAYLKQGKYKEAEELYKQILTRAHER), and 456 to 489 (TTTLKNLGALYRRQGKYEAAETLEDVALRAKKQH).

This sequence belongs to the kinesin light chain family. In terms of assembly, oligomeric complex composed of two heavy chains and two light chains. Interacts with unc-83; the interaction is direct. Interacts with unc-33; the interaction regulates unc-33 neurite localization. Interacts with casy-1.

It is found in the cytoplasm. It localises to the cytoskeleton. Its subcellular location is the nucleus envelope. Its function is as follows. Kinesin is a microtubule-associated force-producing protein that may play a role in organelle transport. The light chain may function in coupling of cargo to the heavy chain or in the modulation of its ATPase activity. Recruits unc-83 (within the unc-83-unc-84 LINC complex) to the nuclear envelope during nuclear migration to mediate the link between the nuclear envelope and the microtubule cytoskeleton in hypodermal precursor cells. This chain is Kinesin light chain, found in Caenorhabditis elegans.